The primary structure comprises 305 residues: Sulfate adenylyltransferase subunit 2 1 (305 aa).

The disordered stretch occupies residues R283–F305.

The protein belongs to the PAPS reductase family. CysD subfamily. In terms of assembly, heterodimer composed of CysD, the smaller subunit, and CysN.

The enzyme catalyses sulfate + ATP + H(+) = adenosine 5'-phosphosulfate + diphosphate. It participates in sulfur metabolism; hydrogen sulfide biosynthesis; sulfite from sulfate: step 1/3. With CysN forms the ATP sulfurylase (ATPS) that catalyzes the adenylation of sulfate producing adenosine 5'-phosphosulfate (APS) and diphosphate, the first enzymatic step in sulfur assimilation pathway. APS synthesis involves the formation of a high-energy phosphoric-sulfuric acid anhydride bond driven by GTP hydrolysis by CysN coupled to ATP hydrolysis by CysD. The protein is Sulfate adenylyltransferase subunit 2 1 of Chromohalobacter salexigens (strain ATCC BAA-138 / DSM 3043 / CIP 106854 / NCIMB 13768 / 1H11).